Here is a 461-residue protein sequence, read N- to C-terminus: D-phenylhydantoinase (461 aa).

Residues His-59, His-61, and Lys-151 each contribute to the a divalent metal cation site. Position 151 is an N6-carboxylysine (Lys-151). Tyr-156 is a binding site for substrate. His-182 and His-239 together coordinate a divalent metal cation. Ser-286 lines the substrate pocket. Asp-313 is an a divalent metal cation binding site. Residue Asn-335 participates in substrate binding.

This sequence belongs to the metallo-dependent hydrolases superfamily. Hydantoinase/dihydropyrimidinase family. In terms of assembly, homotetramer. A divalent metal cation is required as a cofactor. Post-translationally, carboxylation allows a single lysine to coordinate two divalent metal cations.

It carries out the reaction D-5-phenylhydantoin + H2O = N-carbamoyl-D-phenylglycine + H(+). In terms of biological role, catalyzes the stereospecific hydrolysis of the cyclic amide bond of D-hydantoin derivatives with an aromatic side chains at the 5'-position. Has no activity on dihydropyrimidines. The physiological function is unknown. The chain is D-phenylhydantoinase from Escherichia coli (strain SE11).